The following is a 507-amino-acid chain: Beta-Ala-His dipeptidase (507 aa).

A signal peptide spans 1 to 26 (MDPKLGRMAASLLAVLLLLLERGMFS). H132 provides a ligand contact to Zn(2+). The active site involves D134. D165 provides a ligand contact to Zn(2+). E199 serves as the catalytic Proton acceptor. E200 contacts Zn(2+). S219 carries the phosphoserine modification. D228 contacts Zn(2+). N-linked (GlcNAc...) asparagine glycosylation is found at N322 and N382. H478 is a binding site for Zn(2+).

This sequence belongs to the peptidase M20A family. In terms of assembly, homodimer. Requires Zn(2+) as cofactor. As to expression, found in serum and adult nervous central system. Absent in serum from patients with homocarnosinosis.

Its subcellular location is the secreted. The catalysed reaction is Preferential hydrolysis of the beta-Ala-|-His dipeptide (carnosine), and also anserine, Xaa-|-His dipeptides and other dipeptides including homocarnosine.. The enzyme catalyses carnosine + H2O = beta-alanine + L-histidine. It catalyses the reaction anserine + H2O = N(pros)-methyl-L-histidine + beta-alanine. It carries out the reaction L-alanyl-L-histidine + H2O = L-histidine + L-alanine. The catalysed reaction is glycyl-L-histidine + H2O = L-histidine + glycine. The enzyme catalyses L-homocarnosine + H2O = 4-aminobutanoate + L-histidine. Its activity is regulated as follows. Activated by cadmium ions. Inhibited by the metal chelator 1,10-o-phenantrolin. The inhibitory concentration 50% (IC(50)) is 5 uM. Its function is as follows. Catalyzes the peptide bond hydrolysis in Xaa-His dipeptides, displaying the highest activity toward carnosine (beta-alanyl-L-histidine) and anserine (beta-alanyl-3-methyl-histidine). The sequence is that of Beta-Ala-His dipeptidase from Homo sapiens (Human).